The primary structure comprises 698 residues: DNA-directed RNA polymerase subunit beta' (698 aa).

Zn(2+)-binding residues include Cys69, Cys71, Cys89, and Cys92. Residues Asp509, Asp511, and Asp513 each coordinate Mg(2+).

Belongs to the RNA polymerase beta' chain family. RpoC1 subfamily. As to quaternary structure, in plastids the minimal PEP RNA polymerase catalytic core is composed of four subunits: alpha, beta, beta', and beta''. When a (nuclear-encoded) sigma factor is associated with the core the holoenzyme is formed, which can initiate transcription. Requires Mg(2+) as cofactor. Zn(2+) is required as a cofactor.

It localises to the plastid. The protein resides in the chloroplast. The catalysed reaction is RNA(n) + a ribonucleoside 5'-triphosphate = RNA(n+1) + diphosphate. Functionally, DNA-dependent RNA polymerase catalyzes the transcription of DNA into RNA using the four ribonucleoside triphosphates as substrates. The chain is DNA-directed RNA polymerase subunit beta' from Cryptomeria japonica (Japanese cedar).